A 1018-amino-acid polypeptide reads, in one-letter code: Integrator complex subunit 5 (1018 aa).

The interval 1-26 (MSALCDPPGAPGPPGPAPATHGPAPL) is disordered. S2 is modified (N-acetylserine). Residues 8–17 (PGAPGPPGPA) show a composition bias toward pro residues. S278 is subject to Phosphoserine. Helical transmembrane passes span 533 to 553 (LATQ…PLAF), 855 to 875 (LLFE…YCSV), and 929 to 949 (VFSQ…WGFL).

This sequence belongs to the Integrator subunit 5 family. In terms of assembly, component of the Integrator complex, composed of core subunits INTS1, INTS2, INTS3, INTS4, INTS5, INTS6, INTS7, INTS8, INTS9/RC74, INTS10, INTS11/CPSF3L, INTS12, INTS13, INTS14 and INTS15. The core complex associates with protein phosphatase 2A subunits PPP2CA and PPP2R1A, to form the Integrator-PP2A (INTAC) complex.

Its subcellular location is the nucleus. The protein resides in the cytoplasm. It is found in the nucleus membrane. In terms of biological role, component of the integrator complex, a multiprotein complex that terminates RNA polymerase II (Pol II) transcription in the promoter-proximal region of genes. The integrator complex provides a quality checkpoint during transcription elongation by driving premature transcription termination of transcripts that are unfavorably configured for transcriptional elongation: the complex terminates transcription by (1) catalyzing dephosphorylation of the C-terminal domain (CTD) of Pol II subunit POLR2A/RPB1 and SUPT5H/SPT5, (2) degrading the exiting nascent RNA transcript via endonuclease activity and (3) promoting the release of Pol II from bound DNA. The integrator complex is also involved in terminating the synthesis of non-coding Pol II transcripts, such as enhancer RNAs (eRNAs), small nuclear RNAs (snRNAs), telomerase RNAs and long non-coding RNAs (lncRNAs). Mediates recruitment of cytoplasmic dynein to the nuclear envelope, probably as component of the integrator complex. This Mus musculus (Mouse) protein is Integrator complex subunit 5 (Ints5).